We begin with the raw amino-acid sequence, 555 residues long: Protection of telomeres protein 1 (555 aa).

The protein belongs to the telombin family. As to quaternary structure, self-associates. Interacts with ccq1, poz1 and tpz1.

It localises to the nucleus. The protein localises to the chromosome. Its subcellular location is the telomere. In terms of biological role, single-stranded telomeric DNA-binding protein that is required to protect the 3'-end telomeric overhang. It binds the consensus sequence 5'-GGTTAC-3'. Regulates telomerase and telomere length. In Schizosaccharomyces pombe (strain 972 / ATCC 24843) (Fission yeast), this protein is Protection of telomeres protein 1 (pot1).